A 218-amino-acid chain; its full sequence is Probable GTP-binding protein EngB (218 aa).

In terms of domain architecture, EngB-type G spans N21–P192. Residues G29–S36, G56–S60, D75–G78, T142–D145, and F171–S173 contribute to the GTP site. S36 and T58 together coordinate Mg(2+). The tract at residues M194–E218 is disordered.

The protein belongs to the TRAFAC class TrmE-Era-EngA-EngB-Septin-like GTPase superfamily. EngB GTPase family. The cofactor is Mg(2+).

Necessary for normal cell division and for the maintenance of normal septation. The polypeptide is Probable GTP-binding protein EngB (Oleidesulfovibrio alaskensis (strain ATCC BAA-1058 / DSM 17464 / G20) (Desulfovibrio alaskensis)).